Here is a 44-residue protein sequence, read N- to C-terminus: uncharacterized protein (44 aa).

A helical transmembrane segment spans residues 19 to 39 (AVGFVVSFGFFAFLFVMATVI).

It is found in the cell membrane. This is an uncharacterized protein from Bacillus subtilis (strain 168).